A 557-amino-acid polypeptide reads, in one-letter code: uncharacterized protein (557 aa).

Residues 7–206 (SSFIDMLRLG…FACFLEGMLS (200 aa)) form the DhaL domain.

This is an uncharacterized protein from Mycoplasma genitalium (strain ATCC 33530 / DSM 19775 / NCTC 10195 / G37) (Mycoplasmoides genitalium).